The primary structure comprises 401 residues: Adenylosuccinate synthetase (401 aa).

GTP-binding positions include 12–18 and 40–42; these read GDEGKGK and GHT. D13 (proton acceptor) is an active-site residue. The Mg(2+) site is built by D13 and G40. IMP contacts are provided by residues 13 to 16, 38 to 41, T128, R142, Q212, T227, and R290; these read DEGK and NAGH. The Proton donor role is filled by H41. 286 to 292 serves as a coordination point for substrate; it reads ATTRRPR. Residues R292, 318–320, and 390–392 each bind GTP; these read KAD and STG.

This sequence belongs to the adenylosuccinate synthetase family. Homodimer. It depends on Mg(2+) as a cofactor.

Its subcellular location is the cytoplasm. The enzyme catalyses IMP + L-aspartate + GTP = N(6)-(1,2-dicarboxyethyl)-AMP + GDP + phosphate + 2 H(+). It functions in the pathway purine metabolism; AMP biosynthesis via de novo pathway; AMP from IMP: step 1/2. Plays an important role in the de novo pathway of purine nucleotide biosynthesis. Catalyzes the first committed step in the biosynthesis of AMP from IMP. The sequence is that of Adenylosuccinate synthetase from Pseudothermotoga lettingae (strain ATCC BAA-301 / DSM 14385 / NBRC 107922 / TMO) (Thermotoga lettingae).